A 169-amino-acid polypeptide reads, in one-letter code: Lipoprotein signal peptidase (169 aa).

4 consecutive transmembrane segments (helical) span residues 15 to 35 (WLWL…VVMN), 47 to 67 (ILPF…SFLS), 75 to 95 (WLFT…MSKL), and 107 to 127 (AMII…GFVV). Catalysis depends on residues aspartate 128 and aspartate 146. A helical membrane pass occupies residues 141 to 161 (AFNLADMAICLGAAMIILDGF).

It belongs to the peptidase A8 family.

The protein localises to the cell inner membrane. The catalysed reaction is Release of signal peptides from bacterial membrane prolipoproteins. Hydrolyzes -Xaa-Yaa-Zaa-|-(S,diacylglyceryl)Cys-, in which Xaa is hydrophobic (preferably Leu), and Yaa (Ala or Ser) and Zaa (Gly or Ala) have small, neutral side chains.. The protein operates within protein modification; lipoprotein biosynthesis (signal peptide cleavage). Functionally, this protein specifically catalyzes the removal of signal peptides from prolipoproteins. The polypeptide is Lipoprotein signal peptidase (Vibrio parahaemolyticus serotype O3:K6 (strain RIMD 2210633)).